The chain runs to 398 residues: Nicotinate phosphoribosyltransferase (398 aa).

Position 214 is a phosphohistidine; by autocatalysis (His214).

This sequence belongs to the NAPRTase family. Transiently phosphorylated on a His residue during the reaction cycle. Phosphorylation strongly increases the affinity for substrates and increases the rate of nicotinate D-ribonucleotide production. Dephosphorylation regenerates the low-affinity form of the enzyme, leading to product release.

It carries out the reaction nicotinate + 5-phospho-alpha-D-ribose 1-diphosphate + ATP + H2O = nicotinate beta-D-ribonucleotide + ADP + phosphate + diphosphate. It participates in cofactor biosynthesis; NAD(+) biosynthesis; nicotinate D-ribonucleotide from nicotinate: step 1/1. In terms of biological role, catalyzes the synthesis of beta-nicotinate D-ribonucleotide from nicotinate and 5-phospho-D-ribose 1-phosphate at the expense of ATP. The protein is Nicotinate phosphoribosyltransferase of Xanthomonas campestris pv. campestris (strain B100).